Reading from the N-terminus, the 78-residue chain is UPF0349 protein RBAM_029300 (78 aa).

It belongs to the UPF0349 family.

In Bacillus velezensis (strain DSM 23117 / BGSC 10A6 / LMG 26770 / FZB42) (Bacillus amyloliquefaciens subsp. plantarum), this protein is UPF0349 protein RBAM_029300.